The primary structure comprises 248 residues: tRNA (guanine-N(7)-)-methyltransferase (248 aa).

Residues glycine 70, 93 to 94 (EI), 129 to 130 (NA), and leucine 149 each bind S-adenosyl-L-methionine. Aspartate 152 is a catalytic residue. Residue 227 to 229 (SEE) participates in S-adenosyl-L-methionine binding.

The protein belongs to the class I-like SAM-binding methyltransferase superfamily. TrmB family.

It localises to the nucleus. The enzyme catalyses guanosine(46) in tRNA + S-adenosyl-L-methionine = N(7)-methylguanosine(46) in tRNA + S-adenosyl-L-homocysteine. The protein operates within tRNA modification; N(7)-methylguanine-tRNA biosynthesis. Catalyzes the formation of N(7)-methylguanine at position 46 (m7G46) in tRNA. This chain is tRNA (guanine-N(7)-)-methyltransferase, found in Drosophila mojavensis (Fruit fly).